The chain runs to 498 residues: RuvB-like helicase 2 (498 aa).

79-86 (GPPSTGKT) is a binding site for ATP. A disordered region spans residues 458–498 (VTIGQESTDGSTQPQAKQQEVAQPEATQPQSQPEDDKMETD). Polar residues predominate over residues 461–489 (GQESTDGSTQPQAKQQEVAQPEATQPQSQ).

This sequence belongs to the RuvB family. As to quaternary structure, may form heterododecamers with RVB1. Component of the SWR1 chromatin remodeling complex, the INO80 chromatin remodeling complex, and of the R2TP complex.

It localises to the nucleus. The catalysed reaction is ATP + H2O = ADP + phosphate + H(+). Functionally, DNA helicase which participates in several chromatin remodeling complexes, including the SWR1 and the INO80 complexes. The SWR1 complex mediates the ATP-dependent exchange of histone H2A for the H2A variant HZT1 leading to transcriptional regulation of selected genes by chromatin remodeling. The INO80 complex remodels chromatin by shifting nucleosomes and is involved in DNA repair. Also involved in pre-rRNA processing. The polypeptide is RuvB-like helicase 2 (RVB2) (Candida albicans (strain SC5314 / ATCC MYA-2876) (Yeast)).